The primary structure comprises 555 residues: Glucose-6-phosphate isomerase (555 aa).

Glu353 serves as the catalytic Proton donor. Active-site residues include His384 and Lys516.

It belongs to the GPI family.

It is found in the cytoplasm. The catalysed reaction is alpha-D-glucose 6-phosphate = beta-D-fructose 6-phosphate. It functions in the pathway carbohydrate biosynthesis; gluconeogenesis. Its pathway is carbohydrate degradation; glycolysis; D-glyceraldehyde 3-phosphate and glycerone phosphate from D-glucose: step 2/4. Catalyzes the reversible isomerization of glucose-6-phosphate to fructose-6-phosphate. The protein is Glucose-6-phosphate isomerase of Methylobacillus flagellatus (strain ATCC 51484 / DSM 6875 / VKM B-1610 / KT).